The sequence spans 644 residues: MADSEGTDGEGTGCNGWFFVQAIVDKKTGDKISDDEDENATDTGSDLVDFIDDTTTICVQAERETAQALFNVQEAQRDAREMHVLKRKFGCSIENSSEKAAAGKKAKSPLQEISVNVNHPKVKRRLITVPDSGYGYSEVEMLETQVTVENTGNGDSNGSVCSDSQIDCSDSSNMDVENIVPTSPTNQLLQLLHSKNKKAAMYAKFKELYGLSFQDLVRTFKSDRTTCSDWVTAIFGVNPTVAEGFKTLIQPYVLYAHIQCLDCAWGVVILALLRYKCGKNRITVAKGLSTLLHVPDTCMLIEPPKLRSGVAALYWYRTGMSNISEVIGETPEWIQRLTIIQHGVDDSVFDLSEMIQWAFDNDLTDESDIAYEYALIADSNSNAAAFLKSNCQAKYLKDCAVMCRHYKRAQKRQMSMSQWIKWRCDKIEEGGDWKPIVQFLRYQGVEFITFLCALKDFLKGTPKRNCIVLCGPANTGKSYFGMSLLHFLQGTVISHVNSNSHFWLEPLTDRKLAMLDDATDSCWTYFDTYMRNALDGNPISVDRKHRHLVQIKCPPMLITSNTNPVTDNRWPYLNSRLMVFKFPNKLPFDKNRNPVYTINDRNWKCFFERTWCRLDLNEEEEDADSDGHPFAAFKCVTGSNIRTL.

A Nuclear localization signal motif is present at residues Lys86 to Lys88. Residues Ser92 and Ser96 each carry the phosphoserine; by host modification. The DNA-binding region stretch occupies residues Val180–Asp346. The SF3 helicase domain occupies Val445–Val595. Gly471–Ser478 contacts ATP. Residue Lys552 forms a Glycyl lysine isopeptide (Lys-Gly) (interchain with G-Cter in SUMO) linkage.

The protein belongs to the papillomaviridae E1 protein family. Can form hexamers. Interacts with E2 protein; this interaction increases E1 DNA binding specificity. Interacts with host DNA polymerase subunit POLA2. Interacts with host single stranded DNA-binding protein RPA1. Interacts with host TOP1; this interaction stimulates the enzymatic activity of TOP1. In terms of processing, phosphorylated. Sumoylated.

The protein localises to the host nucleus. The enzyme catalyses Couples ATP hydrolysis with the unwinding of duplex DNA by translocating in the 3'-5' direction.. It carries out the reaction ATP + H2O = ADP + phosphate + H(+). In terms of biological role, ATP-dependent DNA 3'-5' helicase required for initiation of viral DNA replication. It forms a complex with the viral E2 protein. The E1-E2 complex binds to the replication origin which contains binding sites for both proteins. During the initial step, a dimer of E1 interacts with a dimer of protein E2 leading to a complex that binds the viral origin of replication with high specificity. Then, a second dimer of E1 displaces the E2 dimer in an ATP-dependent manner to form the E1 tetramer. Following this, two E1 monomers are added to each half of the site, which results in the formation of two E1 trimers on the viral ori. Subsequently, two hexamers will be created. The double hexamer acts as a bi-directional helicase machinery and unwinds the viral DNA and then recruits the host DNA polymerase to start replication. This chain is Replication protein E1, found in Human papillomavirus 59.